The sequence spans 505 residues: Maturase K (505 aa).

The protein belongs to the intron maturase 2 family. MatK subfamily.

It localises to the plastid. The protein localises to the chloroplast. Its function is as follows. Usually encoded in the trnK tRNA gene intron. Probably assists in splicing its own and other chloroplast group II introns. This is Maturase K from Idiospermum australiense (Ribbonwood tree).